We begin with the raw amino-acid sequence, 742 residues long: 2'-5'-oligoadenylate synthase 2 (742 aa).

A disordered region spans residues 1 to 35 (MGNWLTGNWSSDRSSGYSSGWSPGGSSGVPSGPVH). Gly-2 carries the N-myristoyl glycine lipid modification. Low complexity predominate over residues 10 to 21 (SSDRSSGYSSGW). OAS domain stretches follow at residues 60-374 (VPSQ…YWDV) and 382-721 (TPSH…WKVP). An N6-acetyllysine modification is found at Lys-417. Ser-436 serves as a coordination point for ATP. Mg(2+) is bound by residues Asp-448, Asp-450, and Asp-519. ATP-binding residues include Arg-582 and Lys-585.

Belongs to the 2-5A synthase family. Homodimer. Requires Mg(2+) as cofactor. Post-translationally, myristoylation is not essential for its activity. In terms of processing, glycosylated. Glycosylation is essential for its activity. As to expression, expressed in the uterus. Expressed in mammary glands: expressed at low level before the establishment of lactation, then expression strongly increases, and subsequently decreases during early involution.

It localises to the cytoplasm. It is found in the perinuclear region. The enzyme catalyses 3 ATP = 5'-triphosphoadenylyl-(2'-&gt;5')-adenylyl-(2'-&gt;5')-adenosine + 2 diphosphate. Produced as a latent enzyme which is activated by double stranded RNA (dsRNA) generated during the course of viral infection. The dsRNA activator must be at least 15 nucleotides long, and no modification of the 2'-hydroxyl group is tolerated. ssRNA or dsDNA do not act as activators. Strongly inhibited by copper, iron and zinc ions. Partially inhibited by cobalt and nickel ions. In terms of biological role, interferon-induced, dsRNA-activated antiviral enzyme which plays a critical role in cellular innate antiviral response. Activated by detection of double stranded RNA (dsRNA): polymerizes higher oligomers of 2'-5'-oligoadenylates (2-5A) from ATP which then bind to the inactive monomeric form of ribonuclease L (RNASEL) leading to its dimerization and subsequent activation. Activation of RNASEL leads to degradation of cellular as well as viral RNA, resulting in the inhibition of protein synthesis, thus terminating viral replication. Can mediate the antiviral effect via the classical RNASEL-dependent pathway or an alternative antiviral pathway independent of RNASEL. In addition, it may also play a role in other cellular processes such as apoptosis, cell growth, differentiation and gene regulation. May act as a negative regulator of lactation, stopping lactation in virally infected mammary gland lobules, thereby preventing transmission of viruses to neonates. Non-infected lobules would not be affected, allowing efficient pup feeding during infection. This chain is 2'-5'-oligoadenylate synthase 2, found in Mus musculus (Mouse).